Reading from the N-terminus, the 132-residue chain is MAFDGTWKVDRNENYEKFMEKMGINVMKRKLGAHDNLKLTITQDGNKFTVKESSNFRNIDVVFELGVNFPYSLADGTELTGAWTIEGNKLIGKFTRVDNGKELIAVREVSGNELIQTYTYEGVEAKRFFKKE.

N-acetylalanine is present on A2. Positions 83 and 107 each coordinate hexadecanoate. The tetradecanoate site is built by W83 and R107.

Belongs to the calycin superfamily. Fatty-acid binding protein (FABP) family. In terms of tissue distribution, expressed in the small intestine. Highest expression levels in the proximal ileum.

The protein localises to the cytoplasm. Its function is as follows. FABPs are thought to play a role in the intracellular transport of long-chain fatty acids and their acyl-CoA esters. FABP2 is probably involved in triglyceride-rich lipoprotein synthesis. Binds saturated long-chain fatty acids with a high affinity, but binds with a lower affinity to unsaturated long-chain fatty acids. FABP2 may also help maintain energy homeostasis by functioning as a lipid sensor. This is Fatty acid-binding protein, intestinal (Fabp2) from Mus musculus (Mouse).